Here is a 417-residue protein sequence, read N- to C-terminus: Bifunctional thiamine biosynthesis protein ThiDN (417 aa).

Residues 1-235 (MVILAIGGYD…KSKFGYNSNP (235 aa)) form a hydroxymethylpyrimidine/phosphomethylpyrimidine kinase region. 4-amino-5-hydroxymethyl-2-methylpyrimidine is bound at residue Gln-41. Residues 236 to 417 (TYINKEKVIK…VIQKIYNTLM (182 aa)) form a thiamine-phosphate synthase region.

In the N-terminal section; belongs to the ThiD family. The protein in the C-terminal section; belongs to the ThiN family.

The catalysed reaction is 4-amino-5-hydroxymethyl-2-methylpyrimidine + ATP = 4-amino-2-methyl-5-(phosphooxymethyl)pyrimidine + ADP + H(+). It carries out the reaction 4-amino-2-methyl-5-(phosphooxymethyl)pyrimidine + ATP = 4-amino-2-methyl-5-(diphosphooxymethyl)pyrimidine + ADP. The enzyme catalyses 2-[(2R,5Z)-2-carboxy-4-methylthiazol-5(2H)-ylidene]ethyl phosphate + 4-amino-2-methyl-5-(diphosphooxymethyl)pyrimidine + 2 H(+) = thiamine phosphate + CO2 + diphosphate. It catalyses the reaction 2-(2-carboxy-4-methylthiazol-5-yl)ethyl phosphate + 4-amino-2-methyl-5-(diphosphooxymethyl)pyrimidine + 2 H(+) = thiamine phosphate + CO2 + diphosphate. The catalysed reaction is 4-methyl-5-(2-phosphooxyethyl)-thiazole + 4-amino-2-methyl-5-(diphosphooxymethyl)pyrimidine + H(+) = thiamine phosphate + diphosphate. The protein operates within cofactor biosynthesis; thiamine diphosphate biosynthesis; 4-amino-2-methyl-5-diphosphomethylpyrimidine from 5-amino-1-(5-phospho-D-ribosyl)imidazole. It participates in cofactor biosynthesis; thiamine diphosphate biosynthesis; thiamine phosphate from 4-amino-2-methyl-5-diphosphomethylpyrimidine and 4-methyl-5-(2-phosphoethyl)-thiazole: step 1/1. Catalyzes the phosphorylation of hydroxymethylpyrimidine phosphate (HMP-P) to HMP-PP, and of HMP to HMP-P. In terms of biological role, condenses 4-methyl-5-(beta-hydroxyethyl)thiazole monophosphate (THZ-P) and 4-amino-5-hydroxymethyl pyrimidine pyrophosphate (HMP-PP) to form thiamine monophosphate (TMP). The polypeptide is Bifunctional thiamine biosynthesis protein ThiDN (thiDN) (Methanocaldococcus jannaschii (strain ATCC 43067 / DSM 2661 / JAL-1 / JCM 10045 / NBRC 100440) (Methanococcus jannaschii)).